The sequence spans 350 residues: Arginine N-succinyltransferase (350 aa).

Leucine 125 is a succinyl-CoA binding site. Residue histidine 229 is the Proton donor of the active site.

The protein belongs to the arginine N-succinyltransferase family.

The enzyme catalyses succinyl-CoA + L-arginine = N(2)-succinyl-L-arginine + CoA + H(+). The protein operates within amino-acid degradation; L-arginine degradation via AST pathway; L-glutamate and succinate from L-arginine: step 1/5. Catalyzes the transfer of succinyl-CoA to arginine to produce N(2)-succinylarginine. In Yersinia pestis, this protein is Arginine N-succinyltransferase.